The following is a 283-amino-acid chain: Pyridoxal kinase PdxY (283 aa).

S8 is a substrate binding site. Residues D110 and E147 each coordinate ATP. D219 is a binding site for substrate.

The protein belongs to the pyridoxine kinase family. PdxY subfamily. Homodimer. Requires Mg(2+) as cofactor.

The catalysed reaction is pyridoxal + ATP = pyridoxal 5'-phosphate + ADP + H(+). The protein operates within cofactor metabolism; pyridoxal 5'-phosphate salvage; pyridoxal 5'-phosphate from pyridoxal: step 1/1. Pyridoxal kinase involved in the salvage pathway of pyridoxal 5'-phosphate (PLP). Catalyzes the phosphorylation of pyridoxal to PLP. The polypeptide is Pyridoxal kinase PdxY (Corynebacterium diphtheriae (strain ATCC 700971 / NCTC 13129 / Biotype gravis)).